The following is a 349-amino-acid chain: MRVLVVDDSALVRMAVTDILTKAGIEVVDTAKNGREAVEKALKLKPDVITLDINMPEMDGLTALKLIMEKQPTPVVMLSSLTKEGARETLEALKIGAVDFVTKPDGALVDLSSVAQELVRKVQMAASTSLNVLRLQNLKKIKGEVVRGNWKGKTKDVCVLIGSSTGGPSALEMIIPRLPADIPAPVFVVQHMPPGFTKQLAERLNSISEVEVKEAENNERVKDGVVYVAPGGYHMKVRRAANVVRIKVVDGEPVNAVKPSVDVTADSVVQAYGGNVVGAILTGMGEDGAYGMKLIKDRGGLTIASSEDTCMVFGMPKAAIELGGITSVKPVFEIAEEIVRFLEVKLNER.

Residues 2–118 (RVLVVDDSAL…VDLSSVAQEL (117 aa)) enclose the Response regulatory domain. Aspartate 52 carries the 4-aspartylphosphate modification. Residues 159–345 (VLIGSSTGGP…EEIVRFLEVK (187 aa)) form the CheB-type methylesterase domain. Catalysis depends on residues serine 164, histidine 191, and aspartate 287.

Belongs to the CheB family. Post-translationally, phosphorylated by CheA. Phosphorylation of the N-terminal regulatory domain activates the methylesterase activity.

The protein localises to the cytoplasm. The enzyme catalyses [protein]-L-glutamate 5-O-methyl ester + H2O = L-glutamyl-[protein] + methanol + H(+). The catalysed reaction is L-glutaminyl-[protein] + H2O = L-glutamyl-[protein] + NH4(+). In terms of biological role, involved in chemotaxis. Part of a chemotaxis signal transduction system that modulates chemotaxis in response to various stimuli. Catalyzes the demethylation of specific methylglutamate residues introduced into the chemoreceptors (methyl-accepting chemotaxis proteins or MCP) by CheR. Also mediates the irreversible deamidation of specific glutamine residues to glutamic acid. The chain is Protein-glutamate methylesterase/protein-glutamine glutaminase from Archaeoglobus fulgidus (strain ATCC 49558 / DSM 4304 / JCM 9628 / NBRC 100126 / VC-16).